Here is a 361-residue protein sequence, read N- to C-terminus: 3-dehydroquinate synthase (361 aa).

NAD(+) contacts are provided by residues 72–77, 130–131, K142, and K151; these read SGEKEK and TT. Zn(2+) is bound by residues E184, H247, and H264.

It belongs to the sugar phosphate cyclases superfamily. Dehydroquinate synthase family. Requires Co(2+) as cofactor. Zn(2+) serves as cofactor. The cofactor is NAD(+).

It is found in the cytoplasm. It carries out the reaction 7-phospho-2-dehydro-3-deoxy-D-arabino-heptonate = 3-dehydroquinate + phosphate. It functions in the pathway metabolic intermediate biosynthesis; chorismate biosynthesis; chorismate from D-erythrose 4-phosphate and phosphoenolpyruvate: step 2/7. Its function is as follows. Catalyzes the conversion of 3-deoxy-D-arabino-heptulosonate 7-phosphate (DAHP) to dehydroquinate (DHQ). This chain is 3-dehydroquinate synthase, found in Bacillus mycoides (strain KBAB4) (Bacillus weihenstephanensis).